The sequence spans 350 residues: B1 bradykinin receptor (350 aa).

The Extracellular segment spans residues 1–41 (MASRAPLELLPLNRSQLSPPNATTCDDAPEAWDLLHRVLPS). Residues N13 and N21 are each glycosylated (N-linked (GlcNAc...) asparagine). The helical transmembrane segment at 42-62 (VIIIICVCGLLGNLLVLAVLL) threads the bilayer. The Cytoplasmic segment spans residues 63 to 72 (RPRRRLNVAE). A helical membrane pass occupies residues 73–93 (MYLANLAASDLVFVLGLPFWA). The Extracellular segment spans residues 94–110 (ANISNQFRWPFGGLLCR). N-linked (GlcNAc...) asparagine glycosylation occurs at N95. A disulfide bond links C109 and C186. The helical transmembrane segment at 111–131 (LVNGVIKANLFISIFLVVAIS) threads the bilayer. Residues 132–150 (RDRYRALVHPMATRRRRQA) lie on the Cytoplasmic side of the membrane. Residues 151–171 (RATCVLIWVAGSLLSVPTFLF) form a helical membrane-spanning segment. Residues 172–204 (RSIEAVPELNNDSACVLLHPPGAWHVARMVELN) are Extracellular-facing. N-linked (GlcNAc...) asparagine glycosylation occurs at N182. A helical membrane pass occupies residues 205–225 (VLGFLLPLAAIVFFNCHILAS). Over 226–248 (LRGRPEVRGARCGGPPDGRTTAL) the chain is Cytoplasmic. The chain crosses the membrane as a helical span at residues 249-269 (ILTFVAAFLVCWTPYHFFAFL). The Extracellular segment spans residues 270-292 (EFLTQVQVVRGCFWENFKDLGLQ). Residues 293 to 313 (YASFFAFINSCLNPVIYVFVG) traverse the membrane as a helical segment. The Cytoplasmic portion of the chain corresponds to 314–350 (RLFRTRVWDLFKQCAPRRPPAVSWSHRKRVLQLFWQN). C327 carries the S-palmitoyl cysteine lipid modification.

This sequence belongs to the G-protein coupled receptor 1 family. Bradykinin receptor subfamily. BDKRB1 sub-subfamily.

It is found in the cell membrane. Functionally, this is a receptor for bradykinin. Could be a factor in chronic pain and inflammation. The protein is B1 bradykinin receptor (BDKRB1) of Canis lupus familiaris (Dog).